A 282-amino-acid chain; its full sequence is MKALNANISTMSEVSRSATPQSDSPAQAEVTPEVCIRIANFNAWYGSFQAIHNLSLDVPRNQVTAFIGPSGCGKSTLLRWINRMNDIVPSANSRGTLMIDELDVLAQTTDVVNLRRRVGMVFQKPNPFPKSIYDNVAFGPKLHLYLSRAELDELVEWSLRKAAVWDEVKDRLHAPALGLSGGQQQRLCIARAIAVGPEVLLMDEPCSALDPASTLAIEDLIYELREQYTIVMVTHNMQQASRCSDRTAFFFEGKLVESGPTQDVFTKPQEKRTDDYVRGRFG.

Residues 1–25 are compositionally biased toward polar residues; sequence MKALNANISTMSEVSRSATPQSDSP. Residues 1 to 26 are disordered; the sequence is MKALNANISTMSEVSRSATPQSDSPA. An ABC transporter domain is found at 36–277; that stretch reads IRIANFNAWY…PQEKRTDDYV (242 aa). An ATP-binding site is contributed by 68 to 75; sequence GPSGCGKS.

Belongs to the ABC transporter superfamily. Phosphate importer (TC 3.A.1.7) family. As to quaternary structure, the complex is composed of two ATP-binding proteins (PstB), two transmembrane proteins (PstC and PstA) and a solute-binding protein (PstS).

The protein localises to the cell inner membrane. The enzyme catalyses phosphate(out) + ATP + H2O = ADP + 2 phosphate(in) + H(+). Part of the ABC transporter complex PstSACB involved in phosphate import. Responsible for energy coupling to the transport system. The protein is Phosphate import ATP-binding protein PstB of Rhodopirellula baltica (strain DSM 10527 / NCIMB 13988 / SH1).